The sequence spans 291 residues: Elongation factor Ts (291 aa).

Residues 80 to 83 (TDFV) are involved in Mg(2+) ion dislocation from EF-Tu.

Belongs to the EF-Ts family.

The protein localises to the cytoplasm. Functionally, associates with the EF-Tu.GDP complex and induces the exchange of GDP to GTP. It remains bound to the aminoacyl-tRNA.EF-Tu.GTP complex up to the GTP hydrolysis stage on the ribosome. The chain is Elongation factor Ts from Acinetobacter baumannii (strain AB307-0294).